Here is a 333-residue protein sequence, read N- to C-terminus: Adenosine deaminase (333 aa).

His-12 and His-14 together coordinate Zn(2+). 3 residues coordinate substrate: His-14, Asp-16, and Gly-170. His-197 contacts Zn(2+). Catalysis depends on Glu-200, which acts as the Proton donor. Asp-278 is a Zn(2+) binding site. Asp-279 contributes to the substrate binding site.

Belongs to the metallo-dependent hydrolases superfamily. Adenosine and AMP deaminases family. Adenosine deaminase subfamily. Zn(2+) is required as a cofactor.

The enzyme catalyses adenosine + H2O + H(+) = inosine + NH4(+). It catalyses the reaction 2'-deoxyadenosine + H2O + H(+) = 2'-deoxyinosine + NH4(+). Catalyzes the hydrolytic deamination of adenosine and 2-deoxyadenosine. The chain is Adenosine deaminase from Pseudoalteromonas translucida (strain TAC 125).